The primary structure comprises 262 residues: Small ribosomal subunit protein uS2 (262 aa).

The disordered stretch occupies residues 228–262 (VSNEEVAAEQNINLDDKEESEQAETTEENTSVESN). Residues 243–254 (DKEESEQAETTE) show a composition bias toward acidic residues.

This sequence belongs to the universal ribosomal protein uS2 family.

The protein is Small ribosomal subunit protein uS2 of Staphylococcus epidermidis (strain ATCC 35984 / DSM 28319 / BCRC 17069 / CCUG 31568 / BM 3577 / RP62A).